We begin with the raw amino-acid sequence, 242 residues long: ATP synthase subunit a (242 aa).

6 helical membrane-spanning segments follow: residues 29–49 (SSIY…LAFY), 84–104 (FIPL…LGMT), 114–134 (IIVT…VGFV), 140–160 (FLTL…MIVI), 181–201 (MAGH…MIYL), and 203–223 (FLPI…AILQ).

Belongs to the ATPase A chain family. F-type ATPases have 2 components, CF(1) - the catalytic core - and CF(0) - the membrane proton channel. CF(1) has five subunits: alpha(3), beta(3), gamma(1), delta(1), epsilon(1). CF(0) has three main subunits: a(1), b(2) and c(9-12). The alpha and beta chains form an alternating ring which encloses part of the gamma chain. CF(1) is attached to CF(0) by a central stalk formed by the gamma and epsilon chains, while a peripheral stalk is formed by the delta and b chains.

The protein localises to the cell membrane. In terms of biological role, key component of the proton channel; it plays a direct role in the translocation of protons across the membrane. This is ATP synthase subunit a from Rickettsia africae (strain ESF-5).